We begin with the raw amino-acid sequence, 521 residues long: Cytochrome P450 monooxygenase ARMGADRAFT_1018420 (521 aa).

Residues 9–26 (VSPIWILTAIVVVAYTTV) form a helical membrane-spanning segment. Cysteine 443 contacts heme. Asparagine 450 carries N-linked (GlcNAc...) asparagine glycosylation.

This sequence belongs to the cytochrome P450 family. Heme is required as a cofactor.

The protein resides in the membrane. The protein operates within secondary metabolite biosynthesis. In terms of biological role, cytochrome P450 monooxygenase, part of the gene cluster that mediates the biosynthesis of melleolides, a range of antifungal and phytotoxic polyketide derivatives composed of an orsellinic acid (OA) moiety esterified to various sesquiterpene alcohols. The first step in melleolides biosynthesis is performed by the delta(6)-protoilludene synthase PRO1 which catalyzes the cyclization of farnesyl diphosphate to protoilludene. The orsellinic acid synthase armB produces OA by condensing acetyl-CoA with 3 malonyl-CoA units in a three-round chain elongation reaction folowed by a C2-C7 ring closure. ArmB further catalyzes the trans-esterification of OA to the various sesquiterpene alcohols resulting from the hydroxylation of protoilludene. The melleolides cluster also includes 5 cytochrome P450 monooxygenases, 4 NAD(+)-dependent oxidoreductases, one flavin-dependent oxidoreductase, and one O-methyltransferase. The cytochrome P450 monooxygenases may be involved in protoilludene hydroxylation to elaborate melleolides with multiple alcohol groups, such as melleolide D, which carries alcohol functionalities at C-4, C-5, C-10, and C-13. The role of the NAD(+)-dependent enzymes remains unknown. Numerous melleolides, including arnamial, show 5'-O-methylation of the aromatic moiety which may be catalyzed by the methyltransferase encoded in the cluster. The flavin-dependent oxidoreductase might represent the dehydrogenase yielding the aldehyde in position 1 of arnamial and other melleolides. Finally, several halogenase localized outside of the cluster, are able to catalyze the transfer of a single chlorine atom to the melleolide backbone, resulting in a 6'-chloromelleolide product. The polypeptide is Cytochrome P450 monooxygenase ARMGADRAFT_1018420 (Armillaria gallica (Bulbous honey fungus)).